The primary structure comprises 306 residues: HORMA domain-containing protein 2 (306 aa).

Positions 29-232 (HESLVVVKKL…SGFHSMKVKV (204 aa)) constitute an HORMA domain. Serine 271 carries the phosphoserine modification.

As to quaternary structure, interacts with HORMAD1. In terms of processing, phosphorylated in a SPO11-dependent manner. Specifically expressed in meiotic germ cells.

Its subcellular location is the nucleus. The protein resides in the chromosome. In terms of biological role, essential for synapsis surveillance during meiotic prophase via the recruitment of ATR activity. Plays a key role in the male mid-pachytene checkpoint and the female meiotic prophase checkpoint: required for efficient build-up of ATR activity on unsynapsed chromosome regions, a process believed to form the basis of meiotic silencing of unsynapsed chromatin (MSUC) and meiotic prophase quality control in both sexes. Required for the DNA double-strand break-independent, BRCA1-dependent activation of ATR on the sex chromosomes that is essential for normal sex body formation. This chain is HORMA domain-containing protein 2 (Hormad2), found in Mus musculus (Mouse).